Consider the following 67-residue polypeptide: MARITVEDCLKTIPNRFELVLAATYRARQLVQGHSPRVESRDKATVVALREVAAGVTDRDMLTKVPL.

The protein belongs to the RNA polymerase subunit omega family. The RNAP catalytic core consists of 2 alpha, 1 beta, 1 beta' and 1 omega subunit. When a sigma factor is associated with the core the holoenzyme is formed, which can initiate transcription.

The enzyme catalyses RNA(n) + a ribonucleoside 5'-triphosphate = RNA(n+1) + diphosphate. In terms of biological role, promotes RNA polymerase assembly. Latches the N- and C-terminal regions of the beta' subunit thereby facilitating its interaction with the beta and alpha subunits. The sequence is that of DNA-directed RNA polymerase subunit omega from Polynucleobacter asymbioticus (strain DSM 18221 / CIP 109841 / QLW-P1DMWA-1) (Polynucleobacter necessarius subsp. asymbioticus).